The primary structure comprises 407 residues: Tyrosine--tRNA ligase (407 aa).

L-tyrosine is bound at residue tyrosine 35. The 'HIGH' region motif lies at 40–49; it reads PTADSLHVGH. L-tyrosine contacts are provided by tyrosine 168 and glutamine 172. Residues 228 to 232 carry the 'KMSKS' region motif; that stretch reads KMGKT. Lysine 231 contacts ATP. The S4 RNA-binding domain occupies 341 to 405; sequence NLLVDLLVKC…RGKKNFNRIV (65 aa).

Belongs to the class-I aminoacyl-tRNA synthetase family. TyrS type 1 subfamily. As to quaternary structure, homodimer.

It localises to the cytoplasm. The catalysed reaction is tRNA(Tyr) + L-tyrosine + ATP = L-tyrosyl-tRNA(Tyr) + AMP + diphosphate + H(+). Functionally, catalyzes the attachment of tyrosine to tRNA(Tyr) in a two-step reaction: tyrosine is first activated by ATP to form Tyr-AMP and then transferred to the acceptor end of tRNA(Tyr). This is Tyrosine--tRNA ligase from Clostridium botulinum (strain Kyoto / Type A2).